Consider the following 281-residue polypeptide: MDKAKFIDVLSDSTGETAEKAVRAALLQYPDAGVQIRLHTRVRTPEVARPVLERAAQEGALVVFTVVSPELREFVHASTAELNIEAIDLIGSLIVRLGTFLDREPINLPSAMLPLSEEYFRRIEAVEFAVKSDDGKEPRNFKRADIVLVGVSRTSKTPLSTLLAQRGLKVANLPLVLGVPPPLELMEAPQDRVVGLTIGIDQLCEIRQARLRQLGMPSETNYAMREHVRQELDFANRLFAAHPEWPVVDVTKRAIEETAVIILEHLKERDERAKVVRSSLV.

Residue 150-157 (GVSRTSKT) coordinates ADP.

This sequence belongs to the pyruvate, phosphate/water dikinase regulatory protein family. PDRP subfamily.

The catalysed reaction is N(tele)-phospho-L-histidyl/L-threonyl-[pyruvate, phosphate dikinase] + ADP = N(tele)-phospho-L-histidyl/O-phospho-L-threonyl-[pyruvate, phosphate dikinase] + AMP + H(+). The enzyme catalyses N(tele)-phospho-L-histidyl/O-phospho-L-threonyl-[pyruvate, phosphate dikinase] + phosphate + H(+) = N(tele)-phospho-L-histidyl/L-threonyl-[pyruvate, phosphate dikinase] + diphosphate. Bifunctional serine/threonine kinase and phosphorylase involved in the regulation of the pyruvate, phosphate dikinase (PPDK) by catalyzing its phosphorylation/dephosphorylation. In Sorangium cellulosum (strain So ce56) (Polyangium cellulosum (strain So ce56)), this protein is Putative pyruvate, phosphate dikinase regulatory protein.